Reading from the N-terminus, the 100-residue chain is MSDISRDEVAHLAKLSRLALSEEELKQFAAQIDEIVDSVSAVGKVEAEGVEPMSHPHSVHAPMREDVVVRTLTAEQALDQAPAADDDRFMVPQILGGGDE.

Belongs to the GatC family. Heterotrimer of A, B and C subunits.

The enzyme catalyses L-glutamyl-tRNA(Gln) + L-glutamine + ATP + H2O = L-glutaminyl-tRNA(Gln) + L-glutamate + ADP + phosphate + H(+). It catalyses the reaction L-aspartyl-tRNA(Asn) + L-glutamine + ATP + H2O = L-asparaginyl-tRNA(Asn) + L-glutamate + ADP + phosphate + 2 H(+). In terms of biological role, allows the formation of correctly charged Asn-tRNA(Asn) or Gln-tRNA(Gln) through the transamidation of misacylated Asp-tRNA(Asn) or Glu-tRNA(Gln) in organisms which lack either or both of asparaginyl-tRNA or glutaminyl-tRNA synthetases. The reaction takes place in the presence of glutamine and ATP through an activated phospho-Asp-tRNA(Asn) or phospho-Glu-tRNA(Gln). In Corynebacterium aurimucosum (strain ATCC 700975 / DSM 44827 / CIP 107346 / CN-1) (Corynebacterium nigricans), this protein is Aspartyl/glutamyl-tRNA(Asn/Gln) amidotransferase subunit C.